We begin with the raw amino-acid sequence, 427 residues long: Glutamate-1-semialdehyde 2,1-aminomutase (427 aa).

At Lys-265 the chain carries N6-(pyridoxal phosphate)lysine.

The protein belongs to the class-III pyridoxal-phosphate-dependent aminotransferase family. HemL subfamily. In terms of assembly, homodimer. Requires pyridoxal 5'-phosphate as cofactor.

The protein resides in the cytoplasm. It catalyses the reaction (S)-4-amino-5-oxopentanoate = 5-aminolevulinate. It participates in porphyrin-containing compound metabolism; protoporphyrin-IX biosynthesis; 5-aminolevulinate from L-glutamyl-tRNA(Glu): step 2/2. This chain is Glutamate-1-semialdehyde 2,1-aminomutase, found in Idiomarina loihiensis (strain ATCC BAA-735 / DSM 15497 / L2-TR).